The following is a 226-amino-acid chain: Deoxyribose-phosphate aldolase (226 aa).

Residue aspartate 94 is the Proton donor/acceptor of the active site. Lysine 156 acts as the Schiff-base intermediate with acetaldehyde in catalysis. The active-site Proton donor/acceptor is the lysine 185.

It belongs to the DeoC/FbaB aldolase family. DeoC type 1 subfamily.

The protein resides in the cytoplasm. The enzyme catalyses 2-deoxy-D-ribose 5-phosphate = D-glyceraldehyde 3-phosphate + acetaldehyde. Its pathway is carbohydrate degradation; 2-deoxy-D-ribose 1-phosphate degradation; D-glyceraldehyde 3-phosphate and acetaldehyde from 2-deoxy-alpha-D-ribose 1-phosphate: step 2/2. Its function is as follows. Catalyzes a reversible aldol reaction between acetaldehyde and D-glyceraldehyde 3-phosphate to generate 2-deoxy-D-ribose 5-phosphate. In Burkholderia orbicola (strain MC0-3), this protein is Deoxyribose-phosphate aldolase.